Reading from the N-terminus, the 422-residue chain is Enolase (422 aa).

A (2R)-2-phosphoglycerate-binding site is contributed by Gln-162. Residue Glu-204 is the Proton donor of the active site. Asp-241, Glu-285, and Asp-312 together coordinate Mg(2+). (2R)-2-phosphoglycerate is bound by residues Lys-337, Arg-366, Ser-367, and Lys-388. Lys-337 serves as the catalytic Proton acceptor.

It belongs to the enolase family. It depends on Mg(2+) as a cofactor.

The protein resides in the cytoplasm. It localises to the secreted. It is found in the cell surface. The catalysed reaction is (2R)-2-phosphoglycerate = phosphoenolpyruvate + H2O. It functions in the pathway carbohydrate degradation; glycolysis; pyruvate from D-glyceraldehyde 3-phosphate: step 4/5. In terms of biological role, catalyzes the reversible conversion of 2-phosphoglycerate (2-PG) into phosphoenolpyruvate (PEP). It is essential for the degradation of carbohydrates via glycolysis. This Wolinella succinogenes (strain ATCC 29543 / DSM 1740 / CCUG 13145 / JCM 31913 / LMG 7466 / NCTC 11488 / FDC 602W) (Vibrio succinogenes) protein is Enolase.